A 188-amino-acid polypeptide reads, in one-letter code: 3-deoxy-D-manno-octulosonate 8-phosphate phosphatase KdsC (188 aa).

Asp-32 and Asp-34 together coordinate Mg(2+). Substrate is bound by residues Asp-34, 55–59 (NVRDG), Arg-63, Arg-78, Arg-86, and Lys-102. Residue Asp-125 coordinates Mg(2+).

Belongs to the KdsC family. In terms of assembly, homotetramer. Mg(2+) is required as a cofactor.

It carries out the reaction 3-deoxy-alpha-D-manno-2-octulosonate-8-phosphate + H2O = 3-deoxy-alpha-D-manno-oct-2-ulosonate + phosphate. Its pathway is carbohydrate biosynthesis; 3-deoxy-D-manno-octulosonate biosynthesis; 3-deoxy-D-manno-octulosonate from D-ribulose 5-phosphate: step 3/3. It functions in the pathway bacterial outer membrane biogenesis; lipopolysaccharide biosynthesis. In terms of biological role, catalyzes the hydrolysis of 3-deoxy-D-manno-octulosonate 8-phosphate (KDO 8-P) to 3-deoxy-D-manno-octulosonate (KDO) and inorganic phosphate. The protein is 3-deoxy-D-manno-octulosonate 8-phosphate phosphatase KdsC of Escherichia coli (strain K12).